A 291-amino-acid chain; its full sequence is Trimeric intracellular cation channel type B (291 aa).

The Lumenal portion of the chain corresponds to Met-1–Thr-15. Residues Ser-16–Leu-33 traverse the membrane as a helical segment. The Cytoplasmic portion of the chain corresponds to Lys-34–Pro-47. A helical transmembrane segment spans residues Leu-48–Leu-69. The Lumenal portion of the chain corresponds to Ala-70–Asn-80. The chain crosses the membrane as a helical span at residues Thr-81–Leu-100. The Cytoplasmic portion of the chain corresponds to Ile-101–Gln-103. A helical membrane pass occupies residues Ala-104–Arg-122. A 1,2-diacyl-sn-glycero-3-phospho-(1D-myo-inositol-4,5-bisphosphate) contacts are provided by Lys-118 and Arg-122. Over Thr-123–Lys-138 the chain is Lumenal. A helical transmembrane segment spans residues Asn-139 to Ser-156. Over Ile-157–Met-179 the chain is Cytoplasmic. Residues Ser-180–Gln-196 traverse the membrane as a helical segment. Over Gln-197–Asn-207 the chain is Lumenal. The helical transmembrane segment at Leu-208 to Ile-225 threads the bilayer. The Cytoplasmic portion of the chain corresponds to Thr-226–Glu-291. The interval Lys-257–Glu-291 is disordered. Residues Lys-261–Pro-274 are compositionally biased toward polar residues. Ser-262 is modified (phosphoserine). Positions Val-282–Glu-291 are enriched in basic residues.

This sequence belongs to the TMEM38 family. Homotrimer; conformation seems to be controled by binding to diacylglycerol (DAG).

The protein resides in the endoplasmic reticulum membrane. The enzyme catalyses K(+)(in) = K(+)(out). Its activity is regulated as follows. Channel activity is activated by increased cytosolic Ca(2+) levels and blocked by luminal high Ca(2+) levels. Intracellular monovalent cation channel required for maintenance of rapid intracellular calcium release. Acts as a potassium counter-ion channel that functions in synchronization with calcium release from intracellular stores. Activated by increased cytosolic Ca(2+) levels. The polypeptide is Trimeric intracellular cation channel type B (TMEM38B) (Bos taurus (Bovine)).